We begin with the raw amino-acid sequence, 373 residues long: Chaperone protein DnaJ (373 aa).

The J domain occupies 5–70 (DFYATLGVAR…EKRAMYDQYG (66 aa)). A CR-type zinc finger spans residues 134-212 (GVKKRINIPT…CRGAGRNKAV (79 aa)). Positions 147, 150, 164, 167, 186, 189, 200, and 203 each coordinate Zn(2+). 4 CXXCXGXG motif repeats span residues 147-154 (CDVCNGSG), 164-171 (CPTCKGSG), 186-193 (CPTCHGAG), and 200-207 (CVKCRGAG).

This sequence belongs to the DnaJ family. As to quaternary structure, homodimer. It depends on Zn(2+) as a cofactor.

Its subcellular location is the cytoplasm. Functionally, participates actively in the response to hyperosmotic and heat shock by preventing the aggregation of stress-denatured proteins and by disaggregating proteins, also in an autonomous, DnaK-independent fashion. Unfolded proteins bind initially to DnaJ; upon interaction with the DnaJ-bound protein, DnaK hydrolyzes its bound ATP, resulting in the formation of a stable complex. GrpE releases ADP from DnaK; ATP binding to DnaK triggers the release of the substrate protein, thus completing the reaction cycle. Several rounds of ATP-dependent interactions between DnaJ, DnaK and GrpE are required for fully efficient folding. Also involved, together with DnaK and GrpE, in the DNA replication of plasmids through activation of initiation proteins. This Neisseria meningitidis serogroup C (strain 053442) protein is Chaperone protein DnaJ.